Consider the following 273-residue polypeptide: ATP synthase subunit delta (273 aa).

Residues 55-78 (TDPAQSARPRPSSPSVSSAPRSAA) are disordered. The span at 57 to 78 (PAQSARPRPSSPSVSSAPRSAA) shows a compositional bias: low complexity.

It belongs to the ATPase delta chain family. F-type ATPases have 2 components, F(1) - the catalytic core - and F(0) - the membrane proton channel. F(1) has five subunits: alpha(3), beta(3), gamma(1), delta(1), epsilon(1). F(0) has three main subunits: a(1), b(2) and c(10-14). The alpha and beta chains form an alternating ring which encloses part of the gamma chain. F(1) is attached to F(0) by a central stalk formed by the gamma and epsilon chains, while a peripheral stalk is formed by the delta and b chains.

It localises to the cell membrane. Its function is as follows. F(1)F(0) ATP synthase produces ATP from ADP in the presence of a proton or sodium gradient. F-type ATPases consist of two structural domains, F(1) containing the extramembraneous catalytic core and F(0) containing the membrane proton channel, linked together by a central stalk and a peripheral stalk. During catalysis, ATP synthesis in the catalytic domain of F(1) is coupled via a rotary mechanism of the central stalk subunits to proton translocation. In terms of biological role, this protein is part of the stalk that links CF(0) to CF(1). It either transmits conformational changes from CF(0) to CF(1) or is implicated in proton conduction. This is ATP synthase subunit delta from Streptomyces lividans.